Reading from the N-terminus, the 121-residue chain is Succinate dehydrogenase assembly factor 3, mitochondrial (121 aa).

Residues 1 to 35 (MRPSLVRLVRPRRPERKTSPILPPLKLYKALLRAH) constitute a mitochondrion transit peptide.

It belongs to the complex I LYR family. SDHAF3 subfamily. As to quaternary structure, interacts with the iron-sulfur protein subunit within the SDH catalytic dimer.

It is found in the mitochondrion matrix. Plays an essential role in the assembly of succinate dehydrogenase (SDH), an enzyme complex (also referred to as respiratory complex II) that is a component of both the tricarboxylic acid (TCA) cycle and the mitochondrial electron transport chain, and which couples the oxidation of succinate to fumarate with the reduction of ubiquinone (coenzyme Q) to ubiquinol. Promotes maturation of the iron-sulfur protein subunit of the SDH catalytic dimer, protecting it from the deleterious effects of oxidants. May act together with SDHAF1. The polypeptide is Succinate dehydrogenase assembly factor 3, mitochondrial (Debaryomyces hansenii (strain ATCC 36239 / CBS 767 / BCRC 21394 / JCM 1990 / NBRC 0083 / IGC 2968) (Yeast)).